We begin with the raw amino-acid sequence, 373 residues long: 3',5'-bisphosphate nucleotidase AHL (373 aa).

Asp-52 (proton acceptor) is an active-site residue. 4 residues coordinate Mg(2+): Glu-77, Asp-144, Val-146, and Asp-147. The active-site Proton acceptor is Thr-149. Thr-149, Ser-281, Lys-284, Lys-298, and Asp-310 together coordinate adenosine 3',5'-bisphosphate. AMP-binding residues include Ser-281, Lys-284, Lys-298, and Asp-310. Position 310 (Asp-310) interacts with Mg(2+).

The protein belongs to the inositol monophosphatase superfamily. The cofactor is Mg(2+). Expressed in roots, leaves, stems, flowers and siliques.

It catalyses the reaction adenosine 3',5'-bisphosphate + H2O = AMP + phosphate. The enzyme catalyses 3'-phosphoadenylyl sulfate + H2O = adenosine 5'-phosphosulfate + phosphate. Its activity is regulated as follows. Inhibited by Li(+) (IC(50)=10 mM), Na(+) (IC(50)=50 mM) and Ca(2+) (IC(50)=0.06 mM). Phosphatase that converts adenosine 3'-phosphate 5'-phosphosulfate (PAPS) to adenosine 5'-phosphosulfate (APS) and 3'-phosphoadenosine 5'-phosphate (3'-PAP) to AMP. May regulate the flux of sulfur in the sulfur-activation pathway by converting PAPS to APS. Prevents both the toxicity of PAP on RNA processing enzymes as well as the product inhibition by PAP of sulfate conjugation. This is 3',5'-bisphosphate nucleotidase AHL from Arabidopsis thaliana (Mouse-ear cress).